The following is a 352-amino-acid chain: tRNA pseudouridine synthase D (352 aa).

Asp81 functions as the Nucleophile in the catalytic mechanism. The 147-residue stretch at 157-303 (GIPNYFGAQR…MEHERRILRL (147 aa)) folds into the TRUD domain.

The protein belongs to the pseudouridine synthase TruD family.

It catalyses the reaction uridine(13) in tRNA = pseudouridine(13) in tRNA. Responsible for synthesis of pseudouridine from uracil-13 in transfer RNAs. This is tRNA pseudouridine synthase D from Pseudomonas syringae pv. syringae (strain B728a).